The following is a 475-amino-acid chain: Ribulose bisphosphate carboxylase large chain (475 aa).

Positions 1-2 are excised as a propeptide; the sequence is MS. Position 3 is an N-acetylproline (proline 3). Lysine 14 carries the post-translational modification N6,N6,N6-trimethyllysine. Residues asparagine 123 and threonine 173 each contribute to the substrate site. Lysine 175 functions as the Proton acceptor in the catalytic mechanism. A substrate-binding site is contributed by lysine 177. 3 residues coordinate Mg(2+): lysine 201, aspartate 203, and glutamate 204. Position 201 is an N6-carboxylysine (lysine 201). Residue histidine 294 is the Proton acceptor of the active site. Substrate contacts are provided by arginine 295, histidine 327, and serine 379.

It belongs to the RuBisCO large chain family. Type I subfamily. As to quaternary structure, heterohexadecamer of 8 large chains and 8 small chains; disulfide-linked. The disulfide link is formed within the large subunit homodimers. The cofactor is Mg(2+). Post-translationally, the disulfide bond which can form in the large chain dimeric partners within the hexadecamer appears to be associated with oxidative stress and protein turnover.

It localises to the plastid. The protein localises to the chloroplast. The catalysed reaction is 2 (2R)-3-phosphoglycerate + 2 H(+) = D-ribulose 1,5-bisphosphate + CO2 + H2O. It catalyses the reaction D-ribulose 1,5-bisphosphate + O2 = 2-phosphoglycolate + (2R)-3-phosphoglycerate + 2 H(+). In terms of biological role, ruBisCO catalyzes two reactions: the carboxylation of D-ribulose 1,5-bisphosphate, the primary event in carbon dioxide fixation, as well as the oxidative fragmentation of the pentose substrate in the photorespiration process. Both reactions occur simultaneously and in competition at the same active site. In Amaranthus tricolor (Joseph's coat), this protein is Ribulose bisphosphate carboxylase large chain.